Reading from the N-terminus, the 266-residue chain is Trypsin 5G1 (266 aa).

Positions 1 to 18 (MTRIILILTATFFACALG) are cleaved as a signal peptide. Residues 19 to 39 (ASTGGSHPLRPWWNALRSSGR) constitute a propeptide, activation peptide. The 226-residue stretch at 40–265 (IVGGFEVPVE…VRDWVKEVSG (226 aa)) folds into the Peptidase S1 domain. Cys66 and Cys82 form a disulfide bridge. Residues His81 and Asp125 each act as charge relay system in the active site. Intrachain disulfides connect Cys190–Cys206 and Cys217–Cys241. Ser221 functions as the Charge relay system in the catalytic mechanism.

Belongs to the peptidase S1 family. Midgut.

It localises to the secreted. The protein localises to the extracellular space. The catalysed reaction is Preferential cleavage: Arg-|-Xaa, Lys-|-Xaa.. Functionally, major function may be to aid in digestion of the blood meal. This is Trypsin 5G1 from Aedes aegypti (Yellowfever mosquito).